The primary structure comprises 78 residues: Large ribosomal subunit protein bL28 (78 aa).

Residues 1–20 form a disordered region; the sequence is MSRVCQVTGKRPVTGNNRSH.

The protein belongs to the bacterial ribosomal protein bL28 family.

This is Large ribosomal subunit protein bL28 from Photobacterium profundum (strain SS9).